A 430-amino-acid polypeptide reads, in one-letter code: MRKYQQGVGLLEAILASAVLGMALVAAGSYYKREAELMIKSSNAFDVIELSSQIQRYASLSKINNRTNPILKDNKAKEFKDADLKWLKLENCLTAGDVPTTGNNNDLQDQFIACDADYRKGDLSYFGSQFEFSTYVHPSNPEIQRQIKQVVSYFQYRGMERAFIGDAAGYVISEAKKKGFSAQDYRIVLIEPDRVGYFESNVISYEEFIENPSARENFLLKATKDRTLALAVSLAQTGEIAMQRDGSVAFLEDTELCWDTAAGSAKSCLSVRYDTVGNKTELDLKQIDVVSAKGLSFESDGKTKTPVVSTYETFQDGGRAKTINAIECPTGLNNRFAAVVSSFSTAGQNANFSSESAKDSQGTTQKDGSKGPHALLSGISLNWTLTNKVWDVTASIGIESGILPTSGIDSGSLLRNPKSLSFIAFQWCEN.

The segment covering 351–366 has biased composition (polar residues); the sequence is NFSSESAKDSQGTTQK. Residues 351–371 form a disordered region; that stretch reads NFSSESAKDSQGTTQKDGSKG.

In terms of biological role, involved in TCP pilus biogenesis. The chain is Toxin coregulated pilus biosynthesis protein B (tcpB) from Vibrio cholerae serotype O1 (strain ATCC 39315 / El Tor Inaba N16961).